The primary structure comprises 186 residues: UPF0301 protein CGSHiEE_01530 (186 aa).

This sequence belongs to the UPF0301 (AlgH) family.

The protein is UPF0301 protein CGSHiEE_01530 of Haemophilus influenzae (strain PittEE).